The sequence spans 141 residues: Hemoglobin subunit alpha-2 (141 aa).

A Globin domain is found at 1–141 (VLTDAERKEV…VATVLTSKYR (141 aa)). His-58 is an O2 binding site. His-87 contributes to the heme b binding site.

This sequence belongs to the globin family. In terms of assembly, heterotetramer of two alpha chains and two beta chains. As to expression, red blood cells.

Involved in oxygen transport from the lung to the various peripheral tissues. The sequence is that of Hemoglobin subunit alpha-2 from Tachyglossus aculeatus aculeatus (Southeast Australian short-beaked echidna).